The following is a 664-amino-acid chain: MSETLSRHRQLCDLLTEYGHQYYVLDNPTVPDAEYDRLMRELIAIESEHPELKTSASPSVRVGGQPLTAFRQVRHEIPMLSLDNVFSSEELQAFEQRMKDRLKREISFTFCCEPKLDGLAVSLLYVDGQLVQAATRGDGATGEEITENVRTIKAIPLSLRGSDWPARLEVRGEVFMPKAGFEAMNAKALAAGEKVFVNPRNAAAGSLRQLDSRITASRPLNFYAYGVGVGGDQLGDSHFGRLCQLKAWGLPMSPEVKLKEGAAGCQAFHDDILARRGELAYEIDGVVYKVDAIPLQEELGFVARAPRWATAHKFPAQEEMTLLENVEFQVGRTGAVTPVAKLKPVFVGGVTISNATLHNADEIERLGVMIGDTVIVRRAGDVIPQIVAVVEAQRPVDAREILFPTQCPVCGSALERLEGEVVTRCSGGLFCEAQRKEAIKHFAARRAMDVDGLGDKIVEQLVDKGLVKTPADLFSLNAIQLAGLERMGQKSALNLVAAIDAARSTTLPRFLFALGIREVGEATALNLANHFLTLDALRAASVEQLLEVADVGDIVAKHVYYFLRQPHNIEVLAAGIHWPAIEKKEASEQPFAGKTFVLTGTLNLLSRNDAKAALQALGAKVAGSVSAKTDVLVAGEAAGSKLAKAQELGITIWTEEQLQAALQS.

Residues 32 to 36 (DAEYD), 81 to 82 (SL), and E113 contribute to the NAD(+) site. K115 functions as the N6-AMP-lysine intermediate in the catalytic mechanism. The NAD(+) site is built by R136, E173, K289, and K313. Zn(2+)-binding residues include C407, C410, C425, and C431. In terms of domain architecture, BRCT spans 586-664 (ASEQPFAGKT…EEQLQAALQS (79 aa)).

It belongs to the NAD-dependent DNA ligase family. LigA subfamily. Requires Mg(2+) as cofactor. The cofactor is Mn(2+).

The catalysed reaction is NAD(+) + (deoxyribonucleotide)n-3'-hydroxyl + 5'-phospho-(deoxyribonucleotide)m = (deoxyribonucleotide)n+m + AMP + beta-nicotinamide D-nucleotide.. DNA ligase that catalyzes the formation of phosphodiester linkages between 5'-phosphoryl and 3'-hydroxyl groups in double-stranded DNA using NAD as a coenzyme and as the energy source for the reaction. It is essential for DNA replication and repair of damaged DNA. This is DNA ligase from Aeromonas salmonicida (strain A449).